A 275-amino-acid polypeptide reads, in one-letter code: MNTKEIVNKYEFKFNKNLGQNFLVDESVLEDIIKGAEISKEDTVIEIGPGVGTLTKELLERAKEVYSIELDGDLIPILQEELKEYNNFTLIHKDALKIDFNGLMENKDSIKLVANLPYYVTTPIISRLLKEKCDFKSLTIMIQKEVAERIDAEPNCKEYGSLTVLVQYYCNTEIIRKVSPNCFIPRPKVDSIVIKLDRLSEPRVRVKSEKLFFNVVRSSFNMRRKTLWNSLKSLNIDKESMENAFERAGIDPKRRGETLSIEEFGKLSDCIYDIL.

S-adenosyl-L-methionine is bound by residues Asn21, Leu23, Gly48, Glu69, Asp94, and Asn115.

It belongs to the class I-like SAM-binding methyltransferase superfamily. rRNA adenine N(6)-methyltransferase family. RsmA subfamily.

The protein localises to the cytoplasm. The enzyme catalyses adenosine(1518)/adenosine(1519) in 16S rRNA + 4 S-adenosyl-L-methionine = N(6)-dimethyladenosine(1518)/N(6)-dimethyladenosine(1519) in 16S rRNA + 4 S-adenosyl-L-homocysteine + 4 H(+). Functionally, specifically dimethylates two adjacent adenosines (A1518 and A1519) in the loop of a conserved hairpin near the 3'-end of 16S rRNA in the 30S particle. May play a critical role in biogenesis of 30S subunits. The protein is Ribosomal RNA small subunit methyltransferase A of Clostridium botulinum (strain Loch Maree / Type A3).